Here is a 269-residue protein sequence, read N- to C-terminus: MDQSAAKRMTITTLQNACEQGEKIAVLTCYDATFAAVLEEAGVDILLVGDSLGNVVQGKSSTLPVTLDEMIYHVRCVERGTHRVFIMADMPFGTFQVSPQEAFGNAVRLMAAGAQMVKIEGGQHMAETVEFLSCRGIPVCAHIGLMPQFVHQLGGYRVQGKTPNDARQLREDALLLQEAGAAMLLMELIPAVLGEEITRLLSIPTIGIGAGAACSGQVLVLHDMLGISSGTLPRFVRNFMMDADSIQTAVSNYVEAVKLGAFPAYEHTF.

Positions 50 and 89 each coordinate Mg(2+). 3-methyl-2-oxobutanoate contacts are provided by residues 50–51, aspartate 89, and lysine 118; that span reads DS. Glutamate 120 is a binding site for Mg(2+). Glutamate 187 serves as the catalytic Proton acceptor.

The protein belongs to the PanB family. As to quaternary structure, homodecamer; pentamer of dimers. Mg(2+) serves as cofactor.

Its subcellular location is the cytoplasm. The enzyme catalyses 3-methyl-2-oxobutanoate + (6R)-5,10-methylene-5,6,7,8-tetrahydrofolate + H2O = 2-dehydropantoate + (6S)-5,6,7,8-tetrahydrofolate. The protein operates within cofactor biosynthesis; (R)-pantothenate biosynthesis; (R)-pantoate from 3-methyl-2-oxobutanoate: step 1/2. Its function is as follows. Catalyzes the reversible reaction in which hydroxymethyl group from 5,10-methylenetetrahydrofolate is transferred onto alpha-ketoisovalerate to form ketopantoate. The polypeptide is 3-methyl-2-oxobutanoate hydroxymethyltransferase (Nitrosomonas europaea (strain ATCC 19718 / CIP 103999 / KCTC 2705 / NBRC 14298)).